Here is a 458-residue protein sequence, read N- to C-terminus: Probable M18 family aminopeptidase 1 (458 aa).

Residues H95, H170, and H434 each coordinate Zn(2+).

It belongs to the peptidase M18 family. It depends on Zn(2+) as a cofactor.

The polypeptide is Probable M18 family aminopeptidase 1 (apeA) (Borreliella burgdorferi (strain ATCC 35210 / DSM 4680 / CIP 102532 / B31) (Borrelia burgdorferi)).